A 123-amino-acid polypeptide reads, in one-letter code: MLSQTLLEMTEQMIEVAEKGADRYQEGKNSNHSYDFFETIKPAVEENDELAARWAEGALELIKVRRPKYVHKEQIEAVKDNFLELVLQSYVHHIHKKRFKDITESVLYTLHAVKDEIAREDSR.

This is an uncharacterized protein from Bacillus subtilis (strain 168).